Consider the following 352-residue polypeptide: Putative [LysW]-L-2-aminoadipate 6-phosphate reductase (352 aa).

11–14 (SGYT) provides a ligand contact to NADP(+). C148 is an active-site residue. N319 is an NADP(+) binding site.

The protein belongs to the NAGSA dehydrogenase family. Type 1 subfamily. LysY sub-subfamily.

It localises to the cytoplasm. The enzyme catalyses [amino-group carrier protein]-C-terminal-N-(1-carboxy-5-oxopentan-1-yl)-L-glutamine + phosphate + NADP(+) = [amino-group carrier protein]-C-terminal-N-(1-carboxy-5-phosphooxy-5-oxopentan-1-yl)-L-glutamine + NADPH + H(+). Its pathway is amino-acid biosynthesis; L-lysine biosynthesis via AAA pathway; L-lysine from L-alpha-aminoadipate (Thermus route): step 3/5. Functionally, catalyzes the NADPH-dependent reduction of [LysW]-aminoadipate 6-phosphate to yield [LysW]-aminoadipate 6-semialdehyde. This is Putative [LysW]-L-2-aminoadipate 6-phosphate reductase from Thermomicrobium roseum (strain ATCC 27502 / DSM 5159 / P-2).